Reading from the N-terminus, the 143-residue chain is Large ribosomal subunit protein uL15 (143 aa).

The disordered stretch occupies residues 20–52; that stretch reads GRGIGSGKGKTAGRGHKGQHSRAGGYHKVGFEG. Basic residues predominate over residues 30 to 39; it reads TAGRGHKGQH.

It belongs to the universal ribosomal protein uL15 family. Part of the 50S ribosomal subunit.

Binds to the 23S rRNA. In Coxiella burnetii (strain CbuK_Q154) (Coxiella burnetii (strain Q154)), this protein is Large ribosomal subunit protein uL15.